The chain runs to 862 residues: Eukaryotic translation initiation factor 3 subunit C (862 aa).

The interval 1 to 81 (MSSRFFYGGG…EEEEKVTVVK (81 aa)) is disordered. Acidic residues predominate over residues 17–54 (SSDEEELYSDREEEEKSEEEESSEEEDETSEEEESDEE). A compositionally biased stretch (basic and acidic residues) spans 55–65 (TGAKKFLKDVA). A compositionally biased stretch (acidic residues) spans 66–75 (SDSEEEEEEE). Positions 600-774 (FHMHINLELL…NAIVFRKGVE (175 aa)) constitute a PCI domain. The disordered stretch occupies residues 813–862 (RDQGAGARGGRGSGRGGQARGGPRFPGGQQGRRPGGQQFGGGALGGAIKA). Gly residues predominate over residues 818–862 (GARGGRGSGRGGQARGGPRFPGGQQGRRPGGQQFGGGALGGAIKA).

This sequence belongs to the eIF-3 subunit C family. As to quaternary structure, component of the eukaryotic translation initiation factor 3 (eIF-3) complex.

The protein resides in the cytoplasm. In terms of biological role, component of the eukaryotic translation initiation factor 3 (eIF-3) complex, which is involved in protein synthesis of a specialized repertoire of mRNAs and, together with other initiation factors, stimulates binding of mRNA and methionyl-tRNAi to the 40S ribosome. The eIF-3 complex specifically targets and initiates translation of a subset of mRNAs involved in cell proliferation. This Neosartorya fischeri (strain ATCC 1020 / DSM 3700 / CBS 544.65 / FGSC A1164 / JCM 1740 / NRRL 181 / WB 181) (Aspergillus fischerianus) protein is Eukaryotic translation initiation factor 3 subunit C (nip1).